The sequence spans 288 residues: Borealin (288 aa).

The segment at 1–58 (MAPKKRSSRGTRTNTLRSRKLASFLKDFDREVQVRTKQIESDRQTLLKEVENLYNIEV) is required for interaction with INCENP. The required for centromere localization stretch occupies residues 1–88 (MAPKKRSSRG…NRQALEEAAT (88 aa)). Residues 1–149 (MAPKKRSSRG…RKSHKNLRSA (149 aa)) form a required for interaction with SENP3 region. The segment at 10 to 109 (GTRTNTLRSR…TAEAIQTPLK (100 aa)) is required to form a minimal CPC core complex that localizes to the central spindle and midbody and properly executes the role of the CPC during cytokinesis. Positions 20 to 78 (KLASFLKDFDREVQVRTKQIESDRQTLLKEVENLYNIEVLRLPKALQVMKWLDYFALGG) are required for interaction with INCENP and BIRC5. T88 bears the Phosphothreonine; by TTK mark. Position 91 is a citrulline (R91). A Phosphothreonine; by TTK modification is found at T94. Residue T106 is modified to Phosphothreonine. S110 is modified (phosphoserine). Residues 124–134 (KEEEEDEEEEG) are compositionally biased toward acidic residues. Residues 124–173 (KEEEEDEEEEGGGGGGRKSHKNLRSARVKRCPPSKKRTQSIQGRSRSKRL) are disordered. Residues 140–161 (RKSHKNLRSARVKRCPPSKKRT) are compositionally biased toward basic residues. K144 is covalently cross-linked (Glycyl lysine isopeptide (Lys-Gly) (interchain with G-Cter in SUMO2)). S174 bears the Phosphoserine; by AURKB mark. Phosphothreonine occurs at positions 197 and 212. Phosphoserine occurs at positions 227, 232, 246, and 252.

Belongs to the borealin family. In terms of assembly, may form homooligomers and homodimers. Component of the chromosomal passenger complex (CPC) composed of at least BIRC5/survivin, CDCA8/borealin, INCENP, AURKB or AURKC; in the complex forms a triple-helix bundle-based subcomplex with INCENP and BIRC5. Interacts with SENP3, UBE2I and RANBP2. Interacts (phosphorylated) with SGO1 and SGO2; the association is dependent on CDK1. Phosphorylated by TTK, essentially at Thr-88 and Thr-94. Phosphorylation (probably by CDK1) promotes targeting of the CPC to centromeric DNA. Post-translationally, sumoylated by UBE2I and RANBP2. Desumoylated by SENP3 through the removal of SUMO2 and SUMO3. In terms of processing, citrullinated by PADI4.

The protein resides in the nucleus. It is found in the nucleolus. Its subcellular location is the cytoplasm. The protein localises to the chromosome. It localises to the centromere. The protein resides in the cytoskeleton. It is found in the spindle. Its function is as follows. Component of the chromosomal passenger complex (CPC), a complex that acts as a key regulator of mitosis. The CPC complex has essential functions at the centromere in ensuring correct chromosome alignment and segregation and is required for chromatin-induced microtubule stabilization and spindle assembly. In the complex, it may be required to direct the CPC to centromeric DNA. The sequence is that of Borealin (Cdca8) from Rattus norvegicus (Rat).